Reading from the N-terminus, the 172-residue chain is Adenine phosphoribosyltransferase (172 aa).

It belongs to the purine/pyrimidine phosphoribosyltransferase family. Homodimer.

The protein resides in the cytoplasm. It catalyses the reaction AMP + diphosphate = 5-phospho-alpha-D-ribose 1-diphosphate + adenine. The protein operates within purine metabolism; AMP biosynthesis via salvage pathway; AMP from adenine: step 1/1. Catalyzes a salvage reaction resulting in the formation of AMP, that is energically less costly than de novo synthesis. This is Adenine phosphoribosyltransferase from Malacoplasma penetrans (strain HF-2) (Mycoplasma penetrans).